Reading from the N-terminus, the 1076-residue chain is Envelopment polyprotein (1076 aa).

The signal sequence occupies residues methionine 1–alanine 18. Residues tryptophan 19 to tryptophan 455 are Lumenal-facing. 9 cysteine pairs are disulfide-bonded: cysteine 28/cysteine 51, cysteine 145/cysteine 158, cysteine 182/cysteine 329, cysteine 208/cysteine 218, cysteine 260/cysteine 307, cysteine 289/cysteine 294, cysteine 351/cysteine 354, cysteine 358/cysteine 426, and cysteine 378/cysteine 383. The chain crosses the membrane as a helical span at residues leucine 456–leucine 476. Residues arginine 477–leucine 523 are golgi retention signal. At arginine 477 to glycine 539 the chain is on the cytoplasmic side. Residues glycine 544–glycine 566 are internal signal sequence for glycoprotein C. 10 disulfide bridges follow: cysteine 567/cysteine 608, cysteine 580/cysteine 590, cysteine 633/cysteine 729, cysteine 648/cysteine 845, cysteine 654/cysteine 702, cysteine 660/cysteine 709, cysteine 664/cysteine 691, cysteine 695/cysteine 700, cysteine 782/cysteine 797, and cysteine 813/cysteine 827. Residues cysteine 567–tryptophan 1040 are Lumenal-facing. Positions cysteine 654 to cysteine 660 are fusion loop. Residues cysteine 695–cysteine 709 form a fusion loop region. Residues asparagine 857 and asparagine 918 are each glycosylated (N-linked (GlcNAc...) asparagine; by host). 2 cysteine pairs are disulfide-bonded: cysteine 912–cysteine 982 and cysteine 922–cysteine 925. Residue asparagine 940 is glycosylated (N-linked (GlcNAc...) asparagine; by host). Residues isoleucine 1041–isoleucine 1061 traverse the membrane as a helical segment. Residues threonine 1062–alanine 1076 lie on the Cytoplasmic side of the membrane.

Belongs to the phlebovirus envelope glycoprotein family. In terms of assembly, heterodimer with glycoprotein C. Heterodimer with glycoprotein N. Homotrimer (postfusion). Post-translationally, specific enzymatic cleavages in vivo yield mature proteins Glycoprotein C, and Glycoprotein N. In terms of processing, glycosylated. Palmitoylated.

It is found in the virion membrane. The protein resides in the host Golgi apparatus membrane. It localises to the host endoplasmic reticulum membrane. Its function is as follows. Structural component of the virion that interacts with glycoprotein C. It shields the hydrophobic fusion loops of the glycoprotein C, preventing premature fusion. The glycoprotein protrusions are arranged on an icosahedral lattice, with T=12 triangulation. They are able to attach the virion to the host cell receptor CD209/DC-SIGN and to promote fusion of membranes with the late endosome after endocytosis of the virion. Plays a role in the packaging of ribonucleoproteins during virus assembly. Functionally, structural component of the virion that interacts with glycoprotein N. Acts as a class II fusion protein that is activated upon acidification and subsequent repositioning of the glycoprotein N. The glycoprotein protrusions are arranged on an icosahedral lattice, with T=12 triangulation. They are able to attach the virion to the host cell receptor CD209/DC-SIGN and to promote fusion of membranes with the late endosome after endocytosis of the virion. The sequence is that of Envelopment polyprotein (GP) from Alces americanus (American moose).